The chain runs to 52 residues: Protein PROPEP890 (52 aa).

The tract at residues 27–52 (PQADLPQTPNSQVRIVSRDLPRGGNY) is disordered. Positions 31–40 (LPQTPNSQVR) are enriched in polar residues. The segment covering 42-52 (VSRDLPRGGNY) has biased composition (basic and acidic residues).

Expressed in roots. Barely detected in flowers.

Functionally, produces a rapid alkalinization of the cellular media and the induction of defense-related genes, including chitinase 1b, chalcone synthase and CYP93A1. Not active in tobacco or Arabidopsis. The receptor for GmPep890 is probably different from the receptor for GmSubPep. This is Protein PROPEP890 (PROPEP890) from Glycine max (Soybean).